A 65-amino-acid polypeptide reads, in one-letter code: U2-theraphotoxin-Pc1a (65 aa).

A signal peptide spans 1-20 (MGFKLVLFIAVLTLVGSSNA). Residues 21–36 (EISAKMDSRDSPMIQE) constitute a propeptide that is removed on maturation. Disulfide bonds link C39–C56, C46–C59, and C55–C64.

This sequence belongs to the neurotoxin 36 family. 02 subfamily. Expressed by the venom gland.

It localises to the secreted. Its function is as follows. Possesses strong antiplasmodial activity against the intra-erythrocyte stage of P.falciparum in vitro. IC(50) for inhibiting P.falciparum growth is 1.15 uM. Specifically interacts with infected erythrocytes. Does not lyse erythrocytes, is not cytotoxic to nucleated mammalian cells, and does not inhibit neuromuscular function. Has neither antibacterial nor antifungal activity. The sequence is that of U2-theraphotoxin-Pc1a from Psalmopoeus cambridgei (Trinidad chevron tarantula).